We begin with the raw amino-acid sequence, 37 residues long: Large ribosomal subunit protein bL36 (37 aa).

Belongs to the bacterial ribosomal protein bL36 family.

The polypeptide is Large ribosomal subunit protein bL36 (Caldicellulosiruptor saccharolyticus (strain ATCC 43494 / DSM 8903 / Tp8T 6331)).